An 800-amino-acid chain; its full sequence is Transcription initiation factor TFIID subunit 5 (800 aa).

Positions 1–74 are disordered; that stretch reads MAALAEEQTE…KPTVAVSAAA (74 aa). Positions 30-50 are enriched in gly residues; it reads DGAGEGSGGTTNNGPNGGGGN. Positions 92-124 constitute a LisH domain; that stretch reads HDRQTLLAVLQFLRQSKLREAEEALRREAGLLE. The tract at residues 153-189 is disordered; it reads ASAPGPAAPDPPGTGASGATVVSGSASGPAAPGKVGS. The span at 165-189 shows a compositional bias: low complexity; that stretch reads GTGASGATVVSGSASGPAAPGKVGS. The tract at residues 194–340 is NTD2; involved in homo-dimerization; also involved in TFIID-TFIIF contacts in the RNA Pol II pre-initiation complex (PIC); that stretch reads DQPDVSAVLS…NIVQEHLYID (147 aa). Acidic residues predominate over residues 384 to 395; it reads VPLDDEDEEGEN. The segment at 384–438 is disordered; that stretch reads VPLDDEDEEGENEEGKPKKKKPKKDSIGSKSKKQDPNAPPQNRIPLPELKDSDKL. Basic and acidic residues predominate over residues 407-418; the sequence is KDSIGSKSKKQD. 6 WD repeats span residues 468-507, 541-580, 583-624, 625-666, 667-706, and 709-748; these read NAYQGLTAVDVTDDSSLIAGGFADSTVRVWSVTPKKLRSV, GHSGPVYGASFSPDRNYLLSSSEDGTVRLWSLQTFTCLVG, GHNY…RIFA, GHLA…RIFT, GHKGPIHSLTFSPNGRFLATGATDGRVLLWDIGHGLMVGE, and GHTDTVCSLRFSRDGEILASGSMDNTVRLWDAIKAFEDLE.

The protein belongs to the WD repeat TAF5 family. As to quaternary structure, homodimer. Component of the TFIID basal transcription factor complex, composed of TATA-box-binding protein TBP, and a number of TBP-associated factors (TAFs), including TAF1, TAF2, TAF3, TAF4, TAF5, TAF6, TAF7, TAF8, TAF9, TAF10, TAF11, TAF12 and TAF13. The TFIID complex structure can be divided into 3 modules TFIID-A, TFIID-B, and TFIID-C. TAF5 forms the TFIID-A module together with TAF3 and TBP, and in TFIID-B with TAF8. Component of the TFTC-HAT complex, at least composed of TAF5L, TAF6L, TADA3L, SUPT3H/SPT3, TAF2, TAF4, TAF5, GCN5L2/GCN5, TAF10 and TRRAP. TBP is not part of the TFTC-HAT complex. Interacts strongly with the histone H4-related TAF6 and the histone H3-related TAF9, as well as a stable complex comprised of both TAF6 and TAF9. Apparently weaker interactions with TBP, TAF1, TAF11, and TAF12, but not TAF7, also have been observed. In terms of assembly, (Microbial infection) Interacts with SV40 Large T antigen.

It is found in the nucleus. The TFIID basal transcription factor complex plays a major role in the initiation of RNA polymerase II (Pol II)-dependent transcription. TFIID recognizes and binds promoters with or without a TATA box via its subunit TBP, a TATA-box-binding protein, and promotes assembly of the pre-initiation complex (PIC). The TFIID complex consists of TBP and TBP-associated factors (TAFs), including TAF1, TAF2, TAF3, TAF4, TAF5, TAF6, TAF7, TAF8, TAF9, TAF10, TAF11, TAF12 and TAF13. The TFIID complex structure can be divided into 3 modules TFIID-A, TFIID-B, and TFIID-C. TAF5 is involved in two modules of TFIID, in TFIID-A together with TAF3 and TBP, and in TFIID-B with TAF8. Involved in contacts between TFIID and TFIIF in the PIC. This Homo sapiens (Human) protein is Transcription initiation factor TFIID subunit 5 (TAF5).